Reading from the N-terminus, the 640-residue chain is Calpain-5 (640 aa).

The Calpain catalytic domain occupies 26-343; it reads LFEDPLFPAT…FTDIIKCRLI (318 aa). Catalysis depends on residues Cys81, His252, and Asn284. The tract at residues 344-496 is domain III; the sequence is NTSYLSIHKT…VFTDVPSNCR (153 aa). Positions 499 to 617 constitute a C2 domain; it reads RLDEPPRTCW…HTLHLQDRSS (119 aa).

Belongs to the peptidase C2 family.

In terms of biological role, calcium-regulated non-lysosomal thiol-protease. The polypeptide is Calpain-5 (Capn5) (Mus musculus (Mouse)).